The chain runs to 62 residues: Large ribosomal subunit protein bL28 (62 aa).

The disordered stretch occupies residues 1 to 26 (MARKCYVTGKSPKSGNNRSHALNKTK). Residues 11-20 (SPKSGNNRSH) show a composition bias toward polar residues.

It belongs to the bacterial ribosomal protein bL28 family.

The chain is Large ribosomal subunit protein bL28 from Exiguobacterium sibiricum (strain DSM 17290 / CCUG 55495 / CIP 109462 / JCM 13490 / 255-15).